Reading from the N-terminus, the 96-residue chain is Large ribosomal subunit protein uL23 (96 aa).

It belongs to the universal ribosomal protein uL23 family. As to quaternary structure, part of the 50S ribosomal subunit. Contacts protein L29, and trigger factor when it is bound to the ribosome.

Functionally, one of the early assembly proteins it binds 23S rRNA. One of the proteins that surrounds the polypeptide exit tunnel on the outside of the ribosome. Forms the main docking site for trigger factor binding to the ribosome. The polypeptide is Large ribosomal subunit protein uL23 (Alkaliphilus metalliredigens (strain QYMF)).